The chain runs to 982 residues: Chromosome partition protein Smc (982 aa).

33–40 (PNGSGKSN) contacts ATP. Coiled coils occupy residues 171–231 (RYTK…ELAV), 280–310 (SADMQSNELQKELQDIYQKINELEQRKVIID), and 337–377 (QTQL…QIEK). Residues 416–535 (TGILNTLGTF…AKDLNSAINL (120 aa)) form the SMC hinge domain. Coiled coils occupy residues 575–718 (SASL…SARE) and 753–822 (VKLS…IASN).

Belongs to the SMC family. As to quaternary structure, homodimer.

The protein localises to the cytoplasm. Required for chromosome condensation and partitioning. The sequence is that of Chromosome partition protein Smc from Mycoplasma genitalium (strain ATCC 33530 / DSM 19775 / NCTC 10195 / G37) (Mycoplasmoides genitalium).